We begin with the raw amino-acid sequence, 228 residues long: Fibrillarin-like rRNA/tRNA 2'-O-methyltransferase (228 aa).

Residues 85–86, 103–104, 128–129, and 148–151 each bind S-adenosyl-L-methionine; these read TT, EF, DA, and DVAQ.

The protein belongs to the methyltransferase superfamily. Fibrillarin family. In terms of assembly, interacts with nop5. Component of box C/D small ribonucleoprotein (sRNP) particles that contain rpl7ae, FlpA and nop5, plus a guide RNA.

Involved in pre-rRNA and tRNA processing. Utilizes the methyl donor S-adenosyl-L-methionine to catalyze the site-specific 2'-hydroxyl methylation of ribose moieties in rRNA and tRNA. Site specificity is provided by a guide RNA that base pairs with the substrate. Methylation occurs at a characteristic distance from the sequence involved in base pairing with the guide RNA. The sequence is that of Fibrillarin-like rRNA/tRNA 2'-O-methyltransferase from Methanococcus voltae.